Reading from the N-terminus, the 172-residue chain is Sec-independent protein translocase protein TatB (172 aa).

The helical transmembrane segment at Met1–Gly21 threads the bilayer. Positions Gly97–Gln129 are disordered.

It belongs to the TatB family. In terms of assembly, the Tat system comprises two distinct complexes: a TatABC complex, containing multiple copies of TatA, TatB and TatC subunits, and a separate TatA complex, containing only TatA subunits. Substrates initially bind to the TatABC complex, which probably triggers association of the separate TatA complex to form the active translocon.

It localises to the cell inner membrane. Part of the twin-arginine translocation (Tat) system that transports large folded proteins containing a characteristic twin-arginine motif in their signal peptide across membranes. Together with TatC, TatB is part of a receptor directly interacting with Tat signal peptides. TatB may form an oligomeric binding site that transiently accommodates folded Tat precursor proteins before their translocation. The polypeptide is Sec-independent protein translocase protein TatB (Ralstonia nicotianae (strain ATCC BAA-1114 / GMI1000) (Ralstonia solanacearum)).